The sequence spans 100 residues: Small ribosomal subunit protein uS14 (100 aa).

This sequence belongs to the universal ribosomal protein uS14 family. In terms of assembly, part of the 30S ribosomal subunit. Contacts proteins S3 and S10.

Its function is as follows. Binds 16S rRNA, required for the assembly of 30S particles and may also be responsible for determining the conformation of the 16S rRNA at the A site. This chain is Small ribosomal subunit protein uS14, found in Prochlorococcus marinus (strain MIT 9215).